The following is a 984-amino-acid chain: Mineralocorticoid receptor (984 aa).

Positions 1 to 602 are modulating; the sequence is METKGYHSLP…STGSSRPSKI (602 aa). The span at 231–243 shows a compositional bias: polar residues; it reads QGTPLTCSPNVEN. 2 disordered regions span residues 231-329 and 347-373; these read QGTP…AAST and GTSAGSSTLRDVVPSPDTQEKGAQEVP. 5 positions are modified to phosphoserine: Ser250, Ser259, Ser283, Ser287, and Ser299. A compositionally biased stretch (low complexity) spans 259 to 291; the sequence is SPLSSPLSSMKSSISSPPSHCSVKSPVSSPNNV. The span at 292-329 shows a compositional bias: polar residues; the sequence is TLRSSVSSPANINNSRCSVSSPSNTNNRSTLSSPAAST. The Zn(2+) site is built by Cys603, Cys606, Cys620, Cys623, Cys639, Cys645, Cys655, and Cys658. 2 NR C4-type zinc fingers span residues 603–623 and 639–663; these read CLVCGDEASGCHYGVVTCGSC and CAGRNDCIIDKIRRKNCPACRLQKC. Residues 603 to 668 constitute a DNA-binding region (nuclear receptor); sequence CLVCGDEASG…RLQKCLQAGM (66 aa). Positions 669 to 725 are hinge; that stretch reads NLGARKSKKLGKLKGIHEEQPQQQQPPPPPPPPQSPEEGTTYIAPAKEPSVNTALVP. A disordered region spans residues 684-710; it reads IHEEQPQQQQPPPPPPPPQSPEEGTTY. Pro residues predominate over residues 692-703; it reads QQPPPPPPPPQS. In terms of domain architecture, NR LBD spans 726-964; that stretch reads QLSTISRALT…EFPAMLVEII (239 aa). Residues Asn770 and Gln776 each contribute to the 21-hydroxyprogesterone site. Residues Asn770 and Gln776 each contribute to the aldosterone site. Positions 770 and 776 each coordinate progesterone. The tract at residues 782-785 is important for coactivator binding; that stretch reads KWAK. 21-hydroxyprogesterone-binding residues include Arg817 and Thr945. Aldosterone contacts are provided by Arg817 and Thr945. Residues Arg817 and Thr945 each contribute to the progesterone site.

This sequence belongs to the nuclear hormone receptor family. NR3 subfamily. Heteromultimeric cytoplasmic complex with HSP90, HSP70, and FKBP4, in the absence of ligand. After ligand binding, it translocates to the nucleus and binds to DNA as a homodimer and as a heterodimer with NR3C1. May interact with HSD11B2 in the absence of ligand. Binds the coactivators NCOA1, NCOA2, TIF1 and NRIP1. Post-translationally, phosphorylated. As to expression, ubiquitous. Highly expressed in distal tubules, convoluted tubules and cortical collecting duct in kidney, and in sweat glands. Detected at lower levels in cardiomyocytes, in epidermis and in colon enterocytes.

Its subcellular location is the cytoplasm. The protein resides in the nucleus. It localises to the endoplasmic reticulum membrane. In terms of biological role, receptor for both mineralocorticoids (MC) such as aldosterone and glucocorticoids (GC) such as corticosterone or cortisol. Binds to mineralocorticoid response elements (MRE) and transactivates target genes. The effect of MC is to increase ion and water transport and thus raise extracellular fluid volume and blood pressure and lower potassium levels. The chain is Mineralocorticoid receptor (NR3C2) from Homo sapiens (Human).